A 200-amino-acid chain; its full sequence is ATP synthase subunit b 2 (200 aa).

The span at Met-1–Thr-16 shows a compositional bias: polar residues. Positions Met-1–Ala-38 are disordered. A helical transmembrane segment spans residues Thr-46–Ser-66.

It belongs to the ATPase B chain family. As to quaternary structure, F-type ATPases have 2 components, F(1) - the catalytic core - and F(0) - the membrane proton channel. F(1) has five subunits: alpha(3), beta(3), gamma(1), delta(1), epsilon(1). F(0) has three main subunits: a(1), b(2) and c(10-14). The alpha and beta chains form an alternating ring which encloses part of the gamma chain. F(1) is attached to F(0) by a central stalk formed by the gamma and epsilon chains, while a peripheral stalk is formed by the delta and b chains.

It is found in the cell inner membrane. In terms of biological role, f(1)F(0) ATP synthase produces ATP from ADP in the presence of a proton or sodium gradient. F-type ATPases consist of two structural domains, F(1) containing the extramembraneous catalytic core and F(0) containing the membrane proton channel, linked together by a central stalk and a peripheral stalk. During catalysis, ATP synthesis in the catalytic domain of F(1) is coupled via a rotary mechanism of the central stalk subunits to proton translocation. Functionally, component of the F(0) channel, it forms part of the peripheral stalk, linking F(1) to F(0). The b'-subunit is a diverged and duplicated form of b found in plants and photosynthetic bacteria. This chain is ATP synthase subunit b 2 (atpF2), found in Methylorubrum populi (strain ATCC BAA-705 / NCIMB 13946 / BJ001) (Methylobacterium populi).